Here is a 387-residue protein sequence, read N- to C-terminus: Phosphoglycerate kinase (387 aa).

Substrate contacts are provided by residues 21 to 23 (DLN), Arg36, 59 to 62 (HLGR), Arg113, and Arg146. ATP-binding positions include Lys197, Glu314, and 340–343 (GGDT).

It belongs to the phosphoglycerate kinase family. Monomer.

The protein localises to the cytoplasm. It catalyses the reaction (2R)-3-phosphoglycerate + ATP = (2R)-3-phospho-glyceroyl phosphate + ADP. Its pathway is carbohydrate degradation; glycolysis; pyruvate from D-glyceraldehyde 3-phosphate: step 2/5. The sequence is that of Phosphoglycerate kinase from Photorhabdus luminescens (Xenorhabdus luminescens).